Here is a 44-residue protein sequence, read N- to C-terminus: Non-structural protein 7b (44 aa).

Residues 9-29 (FYLCFLAFLLFLVLIMLIIFW) form a helical membrane-spanning segment.

It localises to the host membrane. The polypeptide is Non-structural protein 7b (Bat coronavirus Rp3/2004 (BtCoV/Rp3/2004)).